The primary structure comprises 134 residues: ATP synthase epsilon chain (134 aa).

It belongs to the ATPase epsilon chain family. F-type ATPases have 2 components, CF(1) - the catalytic core - and CF(0) - the membrane proton channel. CF(1) has five subunits: alpha(3), beta(3), gamma(1), delta(1), epsilon(1). CF(0) has three main subunits: a, b and c.

The protein localises to the cell membrane. Functionally, produces ATP from ADP in the presence of a proton gradient across the membrane. This Listeria monocytogenes serotype 4b (strain F2365) protein is ATP synthase epsilon chain.